Reading from the N-terminus, the 392-residue chain is MTLVAITYTRGSLHILNQLLLPHQTTYDPLHSARDAWHAIHEMRVRGAPAIAIVAALSLAVELHTLATNNQLSAEPKDVELLILEKLEFLVSSRPTAVNLAEAAGRLGRIVNGRAQVQGVGGNEVAEAYIEAAERMLEDDVRDNRAIGESGAKWVLEHAITTKGSMSGTGQAKVAVLTHCNTGSLATAGYGTALGVIRSLHATGSLERAYCTETRPYNQGSRLTAFELVHDNIPATLITDNMAAALLARQSAGPAQSVGVSAIIVGADRVAANGDTANKIGTYGLAVLAKYHGVKFLVAAPRTTIDMNTKTGADIVIEERPEKEVTKIRGPRVGEEGNGLGAMETITVAADGIGVWNPAFDVTPAALVDGIITEVGVVEKDGSGVFHLERIF.

The Proton donor role is filled by Asp-268.

Belongs to the eIF-2B alpha/beta/delta subunits family. MtnA subfamily.

The protein resides in the cytoplasm. The protein localises to the nucleus. It catalyses the reaction 5-(methylsulfanyl)-alpha-D-ribose 1-phosphate = 5-(methylsulfanyl)-D-ribulose 1-phosphate. It participates in amino-acid biosynthesis; L-methionine biosynthesis via salvage pathway; L-methionine from S-methyl-5-thio-alpha-D-ribose 1-phosphate: step 1/6. Catalyzes the interconversion of methylthioribose-1-phosphate (MTR-1-P) into methylthioribulose-1-phosphate (MTRu-1-P). This chain is Methylthioribose-1-phosphate isomerase, found in Ajellomyces capsulatus (strain G186AR / H82 / ATCC MYA-2454 / RMSCC 2432) (Darling's disease fungus).